The following is a 379-amino-acid chain: MVLQKLGDAQRILVFGDSTIENKLPVIRALWEASESHPLLKAFLQQAVEIIQEETQKLASHEGSLFLHCIDVLEVAEVYAEADEPDELIASVLALVARFGALVLDLERDDSNKRSVGPVSILGFCTGLLAGAVAACAEDMIKVFDLACEVLAISFRLVVALVRRSKAIEPNAGLWATTFIRISKEELEMQLDDYNLHHGLSQDKKAYIGVSSQSWNSVFAPPSVILHIARQCPILSQISQVPTTAAMAVHASHLSRPDVNWILGSLPGLETPVLPDRLIVSTSTGKPFLAKTLRELIQSIIADISMNILDIDGTIHGICSGLDMTKPVVISAMGPSPNIPALTRRLASGGVQLKTFAVIAGDRPRRVVPRRPSSSGYSS.

A run of 3 helical transmembrane segments spans residues 87 to 107 (ELIA…LDLE), 116 to 136 (VGPV…VAAC), and 141 to 161 (IKVF…VVAL).

It is found in the membrane. It functions in the pathway mycotoxin biosynthesis. Its function is as follows. Part of the gene cluster that mediates the biosynthesis of the selective antifungal agent ascochitine, an o-quinone methide that plays a possible protective role against other microbial competitors in nature and is considered to be important for pathogenicity of legume-associated Didymella species. The pathway probably begins with the synthesis of a keto-aldehyde intermediate by the ascochitine non-reducing polyketide synthase pksAC from successive condensations of 4 malonyl-CoA units, presumably with a simple acetyl-CoA starter unit. Release of the keto-aldehyde intermediate is consistent with the presence of the C-terminal reductive release domain. The HR-PKS (orf7) probably makes a diketide starter unit which is passed to the non-reducing polyketide synthase pksAC for further extension, producing ascochital and ascochitine. The aldehyde dehydrogenase (orf1), the 2-oxoglutarate-dependent dioxygenase (orf3) and the dehydrogenase (orf9) are probably involved in subsequent oxidations of methyl groups to the carboxylic acid of the heterocyclic ring. The ascochitine gene cluster also includes a gene encoding a short peptide with a cupin domain (orf2) that is often found in secondary metabolite gene clusters and which function has still to be determined. This is Ascochitine biosynthesis cluster protein 8 from Didymella fabae (Leaf and pod spot disease fungus).